The sequence spans 144 residues: Small ribosomal subunit protein bS6 (144 aa).

The disordered stretch occupies residues 99 to 144; sequence KASPLAPCEEKGEEGKAEDAADELTTFGMADDDDLGDDDDTVEAGI. Over residues 106–117 the composition is skewed to basic and acidic residues; the sequence is CEEKGEEGKAED. Over residues 128 to 144 the composition is skewed to acidic residues; sequence ADDDDLGDDDDTVEAGI.

It belongs to the bacterial ribosomal protein bS6 family.

In terms of biological role, binds together with bS18 to 16S ribosomal RNA. This is Small ribosomal subunit protein bS6 from Magnetococcus marinus (strain ATCC BAA-1437 / JCM 17883 / MC-1).